The primary structure comprises 548 residues: Glucose-6-phosphate isomerase (548 aa).

Glutamate 355 serves as the catalytic Proton donor. Residues histidine 386 and lysine 514 contribute to the active site.

This sequence belongs to the GPI family.

The protein localises to the cytoplasm. The enzyme catalyses alpha-D-glucose 6-phosphate = beta-D-fructose 6-phosphate. It participates in carbohydrate biosynthesis; gluconeogenesis. Its pathway is carbohydrate degradation; glycolysis; D-glyceraldehyde 3-phosphate and glycerone phosphate from D-glucose: step 2/4. In terms of biological role, catalyzes the reversible isomerization of glucose-6-phosphate to fructose-6-phosphate. The sequence is that of Glucose-6-phosphate isomerase from Hamiltonella defensa subsp. Acyrthosiphon pisum (strain 5AT).